The chain runs to 207 residues: Small ribosomal subunit protein uS2 (207 aa).

The protein belongs to the universal ribosomal protein uS2 family.

In Nitrosopumilus maritimus (strain SCM1), this protein is Small ribosomal subunit protein uS2.